The following is a 78-amino-acid chain: Toxin OAIP 5 (78 aa).

Residues 1 to 19 form the signal peptide; that stretch reads MLIVILTCALLVIYHAAAA. A propeptide spanning residues 20–40 is cleaved from the precursor; that stretch reads EELEAKDVIESKALATLDEER. 3 cysteine pairs are disulfide-bonded: Cys-43/Cys-56, Cys-47/Cys-70, and Cys-64/Cys-75.

It belongs to the neurotoxin 12 (Hwtx-2) family. 05 (OAIP-5) subfamily. In terms of tissue distribution, expressed by the venom gland.

It localises to the secreted. Its function is as follows. Probable ion channel inhibitor. Shows insecticidal activity when injected into mealworms. The protein is Toxin OAIP 5 of Selenotypus plumipes (Australian featherleg tarantula).